A 108-amino-acid chain; its full sequence is UPF0145 protein SYNPCC7002_A1337 (108 aa).

Belongs to the UPF0145 family.

The chain is UPF0145 protein SYNPCC7002_A1337 from Picosynechococcus sp. (strain ATCC 27264 / PCC 7002 / PR-6) (Agmenellum quadruplicatum).